The following is a 95-amino-acid chain: Small ribosomal subunit protein bS6 (95 aa).

This sequence belongs to the bacterial ribosomal protein bS6 family.

Binds together with bS18 to 16S ribosomal RNA. The polypeptide is Small ribosomal subunit protein bS6 (Streptococcus agalactiae serotype Ia (strain ATCC 27591 / A909 / CDC SS700)).